The sequence spans 55 residues: A-type ATP synthase subunit G (55 aa).

In terms of assembly, has multiple subunits, A(3), B(3), C, D, E, F, G, I and K(x); there may be a few other subunits as well.

It is found in the cell membrane. Component of the A-type ATP synthase that produces ATP from ADP in the presence of a proton gradient across the membrane. This is A-type ATP synthase subunit G (atpG) from Methanosarcina mazei (strain ATCC BAA-159 / DSM 3647 / Goe1 / Go1 / JCM 11833 / OCM 88) (Methanosarcina frisia).